Here is a 418-residue protein sequence, read N- to C-terminus: MTSTLPNASTPDPASLQPSVRPGAHGRFGRFGGQYVPETLMPALAELEQAAAQAWNDPAFTAELNQLLKNYVGRATPLYEAERLTAHYRRADGGPRIWLKREDLNHTGAHKINNALGQALLALRMGKKRIIAETGAGQHGVATATVCARFGLECVIYMGAEDMRRQALNVFRMRLLGATVQPVTAGTATLKDATSEAIRDWVTNVESTHYILGSVAGPHPYPMLVRDFHAVIGQEARQQCREAFGRLPDVLMACVGGGSNAMGLFHPFVECTNVRLIGVEAAGDGVATGRHAATITEGRAGVLHGAMSLLLQDSDGQVQEAHSISAGLDYPGVGPEHSYLREIGRAEYGAVTDQQALGALRLVSELEGIIPALETAHAFAWLEQLCPTLPDGSEVVINCSGRGDKDVNTVAEKLGDQL.

Positions 1–18 (MTSTLPNASTPDPASLQP) are enriched in polar residues. The disordered stretch occupies residues 1-23 (MTSTLPNASTPDPASLQPSVRPG). N6-(pyridoxal phosphate)lysine is present on Lys111.

Belongs to the TrpB family. Tetramer of two alpha and two beta chains. Pyridoxal 5'-phosphate is required as a cofactor.

It catalyses the reaction (1S,2R)-1-C-(indol-3-yl)glycerol 3-phosphate + L-serine = D-glyceraldehyde 3-phosphate + L-tryptophan + H2O. Its pathway is amino-acid biosynthesis; L-tryptophan biosynthesis; L-tryptophan from chorismate: step 5/5. Its function is as follows. The beta subunit is responsible for the synthesis of L-tryptophan from indole and L-serine. The chain is Tryptophan synthase beta chain from Parasynechococcus marenigrum (strain WH8102).